Consider the following 131-residue polypeptide: Prefoldin subunit beta (131 aa).

Disordered regions lie at residues 19 to 41 (LQET…RESE) and 112 to 131 (LQGG…AGGA). A compositionally biased stretch (low complexity) spans 20-35 (QETAQQVAQQKQQAET). Over residues 114–131 (GGAGGGPMGPGGPGAGGA) the composition is skewed to gly residues.

Belongs to the prefoldin subunit beta family. As to quaternary structure, heterohexamer of two alpha and four beta subunits.

The protein resides in the cytoplasm. In terms of biological role, molecular chaperone capable of stabilizing a range of proteins. Seems to fulfill an ATP-independent, HSP70-like function in archaeal de novo protein folding. The chain is Prefoldin subunit beta from Natronomonas pharaonis (strain ATCC 35678 / DSM 2160 / CIP 103997 / JCM 8858 / NBRC 14720 / NCIMB 2260 / Gabara) (Halobacterium pharaonis).